A 226-amino-acid chain; its full sequence is Thioredoxin domain-containing protein 9 (226 aa).

The Thioredoxin domain maps to Arg74–Gly180. Phosphoserine occurs at positions 188, 221, and 223.

As to quaternary structure, forms ternary complexes with the chaperonin TCP1 complex, spanning the cylindrical chaperonin cavity and contacting at least 2 subunits.

The protein resides in the cytoplasm. It localises to the nucleus. It is found in the cytoskeleton. Its subcellular location is the microtubule organizing center. The protein localises to the centrosome. The protein resides in the midbody. Its function is as follows. Significantly diminishes the chaperonin TCP1 complex ATPase activity, thus negatively impacts protein folding, including that of actin or tubulin. The polypeptide is Thioredoxin domain-containing protein 9 (TXNDC9) (Homo sapiens (Human)).